A 152-amino-acid chain; its full sequence is UPF0260 protein BR1477/BS1330_I1471 (152 aa).

Belongs to the UPF0260 family.

This Brucella suis biovar 1 (strain 1330) protein is UPF0260 protein BR1477/BS1330_I1471.